We begin with the raw amino-acid sequence, 485 residues long: Peptidyl-prolyl cis-trans isomerase-like 4 (485 aa).

The PPIase cyclophilin-type domain maps to 1–172; sequence MSVLLETSAG…IDIRIKHTVI (172 aa). The RRM domain occupies 251 to 329; the sequence is NVLFVCKLNP…RRIHVDFSQS (79 aa). Positions 377–485 are disordered; that stretch reads NYRMVYGEEE…RDENDRRSRR (109 aa). A compositionally biased stretch (basic and acidic residues) spans 426–485; it reads RPRDRSRDRYHKPRDDRRGDRRDRDRRDQDRNRYRDRDHRDRGREKDRYGRDENDRRSRR.

This sequence belongs to the cyclophilin-type PPIase family. PPIL4 subfamily.

Its subcellular location is the nucleus. The catalysed reaction is [protein]-peptidylproline (omega=180) = [protein]-peptidylproline (omega=0). Functionally, PPIases accelerate the folding of proteins. It catalyzes the cis-trans isomerization of proline imidic peptide bonds in oligopeptides. This Gibberella zeae (strain ATCC MYA-4620 / CBS 123657 / FGSC 9075 / NRRL 31084 / PH-1) (Wheat head blight fungus) protein is Peptidyl-prolyl cis-trans isomerase-like 4 (CYP6).